The sequence spans 385 residues: Putative glutamate--cysteine ligase 2 (385 aa).

It belongs to the glutamate--cysteine ligase type 2 family. YbdK subfamily.

The catalysed reaction is L-cysteine + L-glutamate + ATP = gamma-L-glutamyl-L-cysteine + ADP + phosphate + H(+). Its function is as follows. ATP-dependent carboxylate-amine ligase which exhibits weak glutamate--cysteine ligase activity. This chain is Putative glutamate--cysteine ligase 2, found in Herpetosiphon aurantiacus (strain ATCC 23779 / DSM 785 / 114-95).